We begin with the raw amino-acid sequence, 265 residues long: Phosphonoacetaldehyde hydrolase (265 aa).

The Nucleophile role is filled by Asp10. Mg(2+) contacts are provided by Asp10 and Ala12. The Schiff-base intermediate with substrate role is filled by Lys51. Asp184 contacts Mg(2+).

This sequence belongs to the HAD-like hydrolase superfamily. PhnX family. Homodimer. The cofactor is Mg(2+).

It catalyses the reaction phosphonoacetaldehyde + H2O = acetaldehyde + phosphate + H(+). Involved in phosphonate degradation. The chain is Phosphonoacetaldehyde hydrolase from Latilactobacillus sakei subsp. sakei (strain 23K) (Lactobacillus sakei subsp. sakei).